The primary structure comprises 206 residues: uncharacterized protein (206 aa).

A helical transmembrane segment spans residues 4–24; sequence LLVVIAVALFIAAIVVLVVAI.

Its subcellular location is the membrane. This is an uncharacterized protein from Mycobacterium tuberculosis (strain CDC 1551 / Oshkosh).